An 805-amino-acid polypeptide reads, in one-letter code: Transforming acidic coiled-coil-containing protein 1 (805 aa).

Ala-2 carries the post-translational modification N-acetylalanine. Ala-2 carries N-myristoyl glycine lipidation. Positions 2-55 are interaction with LSM7 and SNRPG; the sequence is AFSPWQILSPVQWAKWTWSAVRGGAAGEDEAGGPEGDPEEEDSQAETKSLSFSS. A phosphoserine mark is found at Ser-4, Ser-10, and Ser-44. Residues 23-140 form a disordered region; sequence RGGAAGEDEA…SVKNFREEPE (118 aa). Residues 28 to 45 show a composition bias toward acidic residues; sequence GEDEAGGPEGDPEEEDSQ. 2 stretches are compositionally biased toward polar residues: residues 47–60 and 111–128; these read ETKS…SEGN and SKTC…QAID. A compositionally biased stretch (basic and acidic residues) spans 130-140; the sequence is HSVKNFREEPE. Residues Ser-147 and Ser-153 each carry the phosphoserine modification. The interval 152 to 259 is interaction with TDRD7; the sequence is FSIETKDSTD…TNAAVEGTPL (108 aa). Positions 206–427 are interaction with YEATS4; it reads EASAEADLKA…DPDNFDESMD (222 aa). SPAZ domains follow at residues 215–297 and 359–507; these read AGNS…TPGT and SKSA…TDEE. A disordered region spans residues 215–457; the sequence is AGNSCPELVP…VNEILESPKK (243 aa). A Bipartite nuclear localization signal 1 motif is present at residues 226 to 241; sequence RRSKLRKPKPVPLRKK. Positions 226–242 are enriched in basic residues; the sequence is RRSKLRKPKPVPLRKKA. At Ser-228 the chain carries Phosphoserine; by AURKC. 2 positions are modified to phosphoserine: Ser-248 and Ser-276. 3 stretches are compositionally biased toward polar residues: residues 296–305, 377–413, and 431–447; these read GTLSSDTNDS, LSQT…SSEG, and PTTT…TGNH. 2 positions are modified to phosphoserine: Ser-381 and Ser-406. A Bipartite nuclear localization signal 2 motif is present at residues 455–471; that stretch reads PKKAKSRLITSGCKVKK. Ser-483 is subject to Phosphoserine. The tract at residues 493-526 is disordered; sequence ISDISNRDGHATDEEKLASTSCGQKSAGAEVKGE. The span at 497–509 shows a compositional bias: basic and acidic residues; the sequence is SNRDGHATDEEKL. Residue Tyr-533 is modified to Phosphotyrosine. Ser-591 is modified (phosphoserine). The stretch at 610–805 forms a coiled coil; sequence IREEIITKEI…ELIAKLGKTD (196 aa). The interaction with CH-TOG stretch occupies residues 701–805; sequence VLEGFKKNEE…ELIAKLGKTD (105 aa).

This sequence belongs to the TACC family. In terms of assembly, interacts with KIAA0097/CH-TOG and with the oncogenic transcription factor YEATS4. Interacts with AURKA, AURKB and AURKC. Interacts with LSM7, TDRD7 and SNRPG. Interacts with GCN5L2 and PCAF. Interacts with the thyroid hormone receptors THRB and THRA, predominantly with isoform alpha-2. The interaction with THRA isoform alpha-1 and THRB is decreased in the presence of thyroid hormone T3. Also interacts with other nuclear receptors, including ESR1, NR3C1, PPARG, RARA and RXRA, preferentially in the absence of their hormonal ligands. In terms of processing, isoform 1 is heavily phosphorylated; isoform 6 is not. In terms of tissue distribution, isoform 1, isoform 3 and isoform 5 are ubiquitous. Isoform 2 is strongly expressed in the brain, weakly detectable in lung and colon, and overexpressed in gastric cancer. Isoform 4 is not detected in normal tissues, but strong expression was found in gastric cancer tissues. Down-regulated in a subset of cases of breast cancer.

The protein resides in the cytoplasm. Its subcellular location is the nucleus. It localises to the cytoskeleton. The protein localises to the microtubule organizing center. It is found in the centrosome. The protein resides in the midbody. Its subcellular location is the membrane. Its function is as follows. Involved in transcription regulation induced by nuclear receptors, including in T3 thyroid hormone and all-trans retinoic acid pathways. Might promote the nuclear localization of the receptors. Likely involved in the processes that promote cell division prior to the formation of differentiated tissues. This is Transforming acidic coiled-coil-containing protein 1 (TACC1) from Homo sapiens (Human).